Here is a 46-residue protein sequence, read N- to C-terminus: Protein PsbN (46 aa).

A helical transmembrane segment spans residues 7 to 27 (ALSVALGVMAVVLGLTGFGVY).

Belongs to the PsbN family.

The protein resides in the cellular thylakoid membrane. In terms of biological role, may play a role in photosystem I and II biogenesis. This Synechococcus sp. (strain CC9902) protein is Protein PsbN.